Consider the following 899-residue polypeptide: Protein translocase subunit SecA (899 aa).

ATP-binding positions include glutamine 87, 105 to 109 (GEGKT), and aspartate 516. The Zn(2+) site is built by cysteine 884, cysteine 886, cysteine 895, and histidine 896.

The protein belongs to the SecA family. In terms of assembly, monomer and homodimer. Part of the essential Sec protein translocation apparatus which comprises SecA, SecYEG and auxiliary proteins SecDF. Other proteins may also be involved. Zn(2+) is required as a cofactor.

The protein localises to the cell inner membrane. Its subcellular location is the cytoplasm. It carries out the reaction ATP + H2O + cellular proteinSide 1 = ADP + phosphate + cellular proteinSide 2.. Part of the Sec protein translocase complex. Interacts with the SecYEG preprotein conducting channel. Has a central role in coupling the hydrolysis of ATP to the transfer of proteins into and across the cell membrane, serving as an ATP-driven molecular motor driving the stepwise translocation of polypeptide chains across the membrane. The chain is Protein translocase subunit SecA from Borreliella afzelii (strain PKo) (Borrelia afzelii).